Consider the following 541-residue polypeptide: Chaperonin GroEL (541 aa).

Residues 29-32, 86-90, Gly413, 478-480, and Asp494 each bind ATP; these read TIGP, DGTTT, and NAA.

It belongs to the chaperonin (HSP60) family. As to quaternary structure, forms a cylinder of 14 subunits composed of two heptameric rings stacked back-to-back. Interacts with the co-chaperonin GroES.

The protein localises to the cytoplasm. It carries out the reaction ATP + H2O + a folded polypeptide = ADP + phosphate + an unfolded polypeptide.. Its function is as follows. Together with its co-chaperonin GroES, plays an essential role in assisting protein folding. The GroEL-GroES system forms a nano-cage that allows encapsulation of the non-native substrate proteins and provides a physical environment optimized to promote and accelerate protein folding. The sequence is that of Chaperonin GroEL from Oenococcus oeni (strain ATCC BAA-331 / PSU-1).